The primary structure comprises 376 residues: Protein RecA (376 aa).

Position 65-72 (65-72 (GPESSGKT)) interacts with ATP. The segment at 316–376 (EHDEIFTSVR…GDDLSDDDIY (61 aa)) is disordered. Positions 331 to 350 (GEKKDSDEDPGDNKKSKDSA) are enriched in basic and acidic residues. Over residues 366–376 (PGDDLSDDDIY) the composition is skewed to acidic residues.

Belongs to the RecA family.

The protein localises to the cytoplasm. Functionally, can catalyze the hydrolysis of ATP in the presence of single-stranded DNA, the ATP-dependent uptake of single-stranded DNA by duplex DNA, and the ATP-dependent hybridization of homologous single-stranded DNAs. It interacts with LexA causing its activation and leading to its autocatalytic cleavage. This chain is Protein RecA, found in Oenococcus oeni (strain ATCC BAA-331 / PSU-1).